A 414-amino-acid chain; its full sequence is Enolase (414 aa).

Gln162 is a binding site for (2R)-2-phosphoglycerate. Glu204 serves as the catalytic Proton donor. 3 residues coordinate Mg(2+): Asp239, Glu280, and Asp307. 4 residues coordinate (2R)-2-phosphoglycerate: Lys332, Arg361, Ser362, and Lys383. Lys332 (proton acceptor) is an active-site residue.

It belongs to the enolase family. Mg(2+) is required as a cofactor.

The protein localises to the cytoplasm. It is found in the secreted. It localises to the cell surface. It catalyses the reaction (2R)-2-phosphoglycerate = phosphoenolpyruvate + H2O. It participates in carbohydrate degradation; glycolysis; pyruvate from D-glyceraldehyde 3-phosphate: step 4/5. In terms of biological role, catalyzes the reversible conversion of 2-phosphoglycerate (2-PG) into phosphoenolpyruvate (PEP). It is essential for the degradation of carbohydrates via glycolysis. The protein is Enolase of Campylobacter jejuni subsp. jejuni serotype O:2 (strain ATCC 700819 / NCTC 11168).